The primary structure comprises 640 residues: Zinc finger and BTB domain-containing protein 22 (640 aa).

The 65-residue stretch at 57–121 folds into the BTB domain; sequence CDVSIRVQGR…AYTGRLSMAA (65 aa). 3 disordered regions span residues 191–244, 308–327, and 332–482; these read RSHA…PVFP, PAPA…EEED, and CEDD…GGTG. Polar residues predominate over residues 192–210; the sequence is SHASSRASENQSPSSSNYF. Ser-203 is subject to Phosphoserine. Positions 318–327 are enriched in acidic residues; the sequence is PDLEEDEEED. Low complexity predominate over residues 431–442; sequence SSSSSSSSSSSS. Residues 469-482 are compositionally biased toward gly residues; it reads GMPGGPGGTPGGTG. A C2H2-type 1; atypical zinc finger spans residues 490-511; that stretch reads FLCHCGKAFSHKSMRDRHVNMH. C2H2-type zinc fingers lie at residues 517–539 and 545–571; these read FDCP…MKTH and YECG…ERRH. Residues 571–640 form a disordered region; sequence HRLVGGGGGG…MGFGGGGGTN (70 aa). A compositionally biased stretch (gly residues) spans 574 to 588; it reads VGGGGGGGPGPGGPT.

Belongs to the krueppel C2H2-type zinc-finger protein family.

It localises to the nucleus. Functionally, may be involved in transcriptional regulation. The sequence is that of Zinc finger and BTB domain-containing protein 22 (ZBTB22) from Canis lupus familiaris (Dog).